Here is a 297-residue protein sequence, read N- to C-terminus: ER membrane protein complex subunit 2 (297 aa).

N-acetylalanine is present on Ala-2. TPR repeat units lie at residues 87–120, 155–188, and 192–225; these read HRVK…DPTN, QEAW…NPYN, and CQQY…NNRN. Lys-255 is subject to N6-acetyllysine.

Belongs to the EMC2 family. As to quaternary structure, component of the ER membrane protein complex (EMC).

Its subcellular location is the endoplasmic reticulum membrane. Functionally, part of the endoplasmic reticulum membrane protein complex (EMC) that enables the energy-independent insertion into endoplasmic reticulum membranes of newly synthesized membrane proteins. Preferentially accommodates proteins with transmembrane domains that are weakly hydrophobic or contain destabilizing features such as charged and aromatic residues. Involved in the cotranslational insertion of multi-pass membrane proteins in which stop-transfer membrane-anchor sequences become ER membrane spanning helices. It is also required for the post-translational insertion of tail-anchored/TA proteins in endoplasmic reticulum membranes. By mediating the proper cotranslational insertion of N-terminal transmembrane domains in an N-exo topology, with translocated N-terminus in the lumen of the ER, controls the topology of multi-pass membrane proteins like the G protein-coupled receptors. By regulating the insertion of various proteins in membranes, it is indirectly involved in many cellular processes. This chain is ER membrane protein complex subunit 2, found in Bos taurus (Bovine).